Here is a 344-residue protein sequence, read N- to C-terminus: N-lysine methyltransferase KMT5A-A (344 aa).

The segment at 143–176 (TSSKHRKPARRKVKRSTKRAAESKSPANRKVTDY) is disordered. Basic residues predominate over residues 145-160 (SKHRKPARRKVKRSTK). The SET domain occupies 208-329 (DGMMVRFIEG…EGEELLYDYG (122 aa)). Residues 218-220 (KGR), Tyr263, and 290-291 (NH) each bind S-adenosyl-L-methionine.

This sequence belongs to the class V-like SAM-binding methyltransferase superfamily. Histone-lysine methyltransferase family. PR/SET subfamily.

The protein resides in the nucleus. It localises to the chromosome. The enzyme catalyses L-lysyl(20)-[histone H4] + S-adenosyl-L-methionine = N(6)-methyl-L-lysyl(20)-[histone H4] + S-adenosyl-L-homocysteine + H(+). It carries out the reaction L-lysyl-[protein] + S-adenosyl-L-methionine = N(6)-methyl-L-lysyl-[protein] + S-adenosyl-L-homocysteine + H(+). Protein-lysine N-methyltransferase that monomethylates both histones and non-histone proteins. Specifically monomethylates 'Lys-20' of histone H4 (H4K20me1). H4K20me1 is enriched during mitosis and represents a specific tag for epigenetic transcriptional repression. Mainly functions in euchromatin regions, thereby playing a central role in the silencing of euchromatic genes. Required for cell proliferation, probably by contributing to the maintenance of proper higher-order structure of DNA during mitosis. Involved in chromosome condensation and proper cytokinesis. This chain is N-lysine methyltransferase KMT5A-A, found in Danio rerio (Zebrafish).